A 359-amino-acid polypeptide reads, in one-letter code: MRQILIAVAIALAVAILLTPVLIRLFTRQGFGHEIREDGPPSHHKKRGTPSMGGVAIIAGIWVSYFGTHLVGVLMDGKGPSASGLLVLGLATSLGVVGFLDDLIKLRRARNLGLNKTAKTVGILVAAVLFGVLALQFRNADGLTPGSAELSYVREIATVTLAPAVFVLFCVVVVSAWSNAVNFTDGLDGLAAGAMAMVCAAYVLITFWQFRNACATAPGVGCYNVRDPLDLAIIAAATAGACIGFLWWNAAPAKIFMGDTGSLALGGIIAGLSVTSRTEMLAVVLGALFVAEVTSVVVQILAFRTTGRRVFRMAPFHHHFELVGWAETTVIIRFWLLTAIACGLGVALFYSEWLTTVGA.

10 helical membrane-spanning segments follow: residues 3–23, 55–75, 84–104, 117–137, 156–176, 190–210, 231–251, 255–275, 283–303, and 330–350; these read QILI…PVLI, VAII…GVLM, GLLV…DDLI, TAKT…ALQF, IATV…VVSA, LAAG…FWQF, LAII…WNAA, IFMG…LSVT, VVLG…ILAF, and VIIR…ALFY.

Belongs to the glycosyltransferase 4 family. MraY subfamily. Mg(2+) is required as a cofactor.

Its subcellular location is the cell membrane. It catalyses the reaction UDP-N-acetyl-alpha-D-muramoyl-L-alanyl-gamma-D-glutamyl-meso-2,6-diaminopimeloyl-D-alanyl-D-alanine + di-trans,octa-cis-undecaprenyl phosphate = di-trans,octa-cis-undecaprenyl diphospho-N-acetyl-alpha-D-muramoyl-L-alanyl-D-glutamyl-meso-2,6-diaminopimeloyl-D-alanyl-D-alanine + UMP. Its pathway is cell wall biogenesis; peptidoglycan biosynthesis. Catalyzes the initial step of the lipid cycle reactions in the biosynthesis of the cell wall peptidoglycan: transfers peptidoglycan precursor phospho-MurNAc-pentapeptide from UDP-MurNAc-pentapeptide onto the lipid carrier undecaprenyl phosphate, yielding undecaprenyl-pyrophosphoryl-MurNAc-pentapeptide, known as lipid I. The protein is Phospho-N-acetylmuramoyl-pentapeptide-transferase of Mycolicibacterium gilvum (strain PYR-GCK) (Mycobacterium gilvum (strain PYR-GCK)).